The primary structure comprises 427 residues: 3-phosphoshikimate 1-carboxyvinyltransferase (427 aa).

Lys22, Ser23, and Arg27 together coordinate 3-phosphoshikimate. Lys22 provides a ligand contact to phosphoenolpyruvate. Phosphoenolpyruvate contacts are provided by Gly96 and Arg124. Ser170, Ser171, Gln172, Ser198, Asp313, Asn336, and Lys340 together coordinate 3-phosphoshikimate. Gln172 provides a ligand contact to phosphoenolpyruvate. The active-site Proton acceptor is Asp313. Positions 344, 386, and 411 each coordinate phosphoenolpyruvate.

This sequence belongs to the EPSP synthase family. In terms of assembly, monomer.

It is found in the cytoplasm. It catalyses the reaction 3-phosphoshikimate + phosphoenolpyruvate = 5-O-(1-carboxyvinyl)-3-phosphoshikimate + phosphate. It participates in metabolic intermediate biosynthesis; chorismate biosynthesis; chorismate from D-erythrose 4-phosphate and phosphoenolpyruvate: step 6/7. In terms of biological role, catalyzes the transfer of the enolpyruvyl moiety of phosphoenolpyruvate (PEP) to the 5-hydroxyl of shikimate-3-phosphate (S3P) to produce enolpyruvyl shikimate-3-phosphate and inorganic phosphate. The sequence is that of 3-phosphoshikimate 1-carboxyvinyltransferase from Aeromonas salmonicida (strain A449).